Consider the following 177-residue polypeptide: ATP synthase subunit delta (177 aa).

This sequence belongs to the ATPase delta chain family. In terms of assembly, F-type ATPases have 2 components, F(1) - the catalytic core - and F(0) - the membrane proton channel. F(1) has five subunits: alpha(3), beta(3), gamma(1), delta(1), epsilon(1). F(0) has three main subunits: a(1), b(2) and c(10-14). The alpha and beta chains form an alternating ring which encloses part of the gamma chain. F(1) is attached to F(0) by a central stalk formed by the gamma and epsilon chains, while a peripheral stalk is formed by the delta and b chains.

It localises to the cell inner membrane. In terms of biological role, f(1)F(0) ATP synthase produces ATP from ADP in the presence of a proton or sodium gradient. F-type ATPases consist of two structural domains, F(1) containing the extramembraneous catalytic core and F(0) containing the membrane proton channel, linked together by a central stalk and a peripheral stalk. During catalysis, ATP synthesis in the catalytic domain of F(1) is coupled via a rotary mechanism of the central stalk subunits to proton translocation. This protein is part of the stalk that links CF(0) to CF(1). It either transmits conformational changes from CF(0) to CF(1) or is implicated in proton conduction. In Enterobacter sp. (strain 638), this protein is ATP synthase subunit delta.